The primary structure comprises 216 residues: UPF0502 protein Pmen_2627 (216 aa).

This sequence belongs to the UPF0502 family.

This Ectopseudomonas mendocina (strain ymp) (Pseudomonas mendocina) protein is UPF0502 protein Pmen_2627.